The chain runs to 188 residues: Elongation factor P-like protein (188 aa).

Belongs to the elongation factor P family.

The sequence is that of Elongation factor P-like protein from Xanthomonas axonopodis pv. citri (strain 306).